The chain runs to 877 residues: Probable linoleate 9S-lipoxygenase 4 (877 aa).

The region spanning 38–165 is the PLAT domain; the sequence is GDFHASLLDG…NYQYERVFFA (128 aa). In terms of domain architecture, Lipoxygenase spans 168–877; sequence TYLPSKMPAP…AMGIPNSISI (710 aa). Residues 229 to 252 form a disordered region; sequence GSQELPYPRRGRTGRAPTKTDPNT. Positions 528, 533, 719, 723, and 877 each coordinate Fe cation.

It belongs to the lipoxygenase family. Requires Fe cation as cofactor.

It carries out the reaction (9Z,12Z)-octadecadienoate + O2 = (9S)-hydroperoxy-(10E,12Z)-octadecadienoate. The protein operates within lipid metabolism; oxylipin biosynthesis. Plant lipoxygenase may be involved in a number of diverse aspects of plant physiology including growth and development, pest resistance, and senescence or responses to wounding. Catalyzes the hydroperoxidation of lipids containing a cis,cis-1,4-pentadiene structure. The sequence is that of Probable linoleate 9S-lipoxygenase 4 from Oryza sativa subsp. japonica (Rice).